The following is a 229-amino-acid chain: UPF0758 protein Cbei_0490 (229 aa).

The region spanning 107-229 (KITSPKDLAS…FVSLKERGLI (123 aa)) is the MPN domain. Zn(2+) contacts are provided by His178, His180, and Asp191. Residues 178–191 (HNHPSGDPTPSRED) carry the JAMM motif motif.

This sequence belongs to the UPF0758 family.

This is UPF0758 protein Cbei_0490 from Clostridium beijerinckii (strain ATCC 51743 / NCIMB 8052) (Clostridium acetobutylicum).